Reading from the N-terminus, the 302-residue chain is Giardin subunit alpha-5 (302 aa).

4 Annexin repeats span residues 1 to 72, 74 to 144, 153 to 226, and 230 to 298; these read MTST…VNMW, SRHE…VAGW, GSVE…AAHF, and GLPV…TLWR.

It belongs to the annexin family. Giardin subunit alpha subfamily.

It localises to the cytoplasm. The protein localises to the cytoskeleton. Functionally, giardins are involved in parasite attachment to the intestinal mucosa and in the cytoskeletal disassembly and reassembly that marks the transition from infectious trophozoite to transmissible cyst. They may interact with other cytoskeletal proteins such as microtubules in the microribbons or crossbridges, to maintain the integrity of the ventral disk. This chain is Giardin subunit alpha-5, found in Giardia intestinalis (Giardia lamblia).